Reading from the N-terminus, the 299-residue chain is Rhodanese-like/PpiC domain-containing protein 12, chloroplastic (299 aa).

A chloroplast-targeting transit peptide spans 1-81 (MFRVTGTLSA…SGFPALKMRA (81 aa)). Residue Ser-82 is modified to N-acetylserine. Residues 93 to 183 (SREILVQHLL…FGLHLLQVLS (91 aa)) form the PpiC domain. The 93-residue stretch at 205–297 (FMDEAQLIDV…YSLKVDPSIP (93 aa)) folds into the Rhodanese domain. Cys-257 (cysteine persulfide intermediate) is an active-site residue.

It localises to the plastid. Its subcellular location is the chloroplast. In Arabidopsis thaliana (Mouse-ear cress), this protein is Rhodanese-like/PpiC domain-containing protein 12, chloroplastic.